We begin with the raw amino-acid sequence, 273 residues long: Formamidopyrimidine-DNA glycosylase (273 aa).

Residue P2 is the Schiff-base intermediate with DNA of the active site. E3 serves as the catalytic Proton donor. The active-site Proton donor; for beta-elimination activity is K58. DNA-binding residues include H91, R109, and R154. An FPG-type zinc finger spans residues 239 to 273; it reads FCYARTGEPCRICKTPIRQIVQGQRSTFYCPNCQK. The active-site Proton donor; for delta-elimination activity is R263.

It belongs to the FPG family. As to quaternary structure, monomer. Zn(2+) is required as a cofactor.

The catalysed reaction is Hydrolysis of DNA containing ring-opened 7-methylguanine residues, releasing 2,6-diamino-4-hydroxy-5-(N-methyl)formamidopyrimidine.. It carries out the reaction 2'-deoxyribonucleotide-(2'-deoxyribose 5'-phosphate)-2'-deoxyribonucleotide-DNA = a 3'-end 2'-deoxyribonucleotide-(2,3-dehydro-2,3-deoxyribose 5'-phosphate)-DNA + a 5'-end 5'-phospho-2'-deoxyribonucleoside-DNA + H(+). Its function is as follows. Involved in base excision repair of DNA damaged by oxidation or by mutagenic agents. Acts as a DNA glycosylase that recognizes and removes damaged bases. Has a preference for oxidized purines, such as 7,8-dihydro-8-oxoguanine (8-oxoG). Has AP (apurinic/apyrimidinic) lyase activity and introduces nicks in the DNA strand. Cleaves the DNA backbone by beta-delta elimination to generate a single-strand break at the site of the removed base with both 3'- and 5'-phosphates. The sequence is that of Formamidopyrimidine-DNA glycosylase from Janthinobacterium sp. (strain Marseille) (Minibacterium massiliensis).